The chain runs to 103 residues: UPF0473 protein LCA_0390 (103 aa).

This sequence belongs to the UPF0473 family.

This is UPF0473 protein LCA_0390 from Latilactobacillus sakei subsp. sakei (strain 23K) (Lactobacillus sakei subsp. sakei).